We begin with the raw amino-acid sequence, 276 residues long: Shikimate dehydrogenase (NADP(+)) (276 aa).

Shikimate contacts are provided by residues 18-20 (SRS) and T65. The active-site Proton acceptor is K69. 2 residues coordinate shikimate: N90 and D106. Residues 132-136 (GAGGA) and I221 contribute to the NADP(+) site. Residue Y223 participates in shikimate binding. G244 serves as a coordination point for NADP(+).

The protein belongs to the shikimate dehydrogenase family. Homodimer.

It catalyses the reaction shikimate + NADP(+) = 3-dehydroshikimate + NADPH + H(+). It participates in metabolic intermediate biosynthesis; chorismate biosynthesis; chorismate from D-erythrose 4-phosphate and phosphoenolpyruvate: step 4/7. Functionally, involved in the biosynthesis of the chorismate, which leads to the biosynthesis of aromatic amino acids. Catalyzes the reversible NADPH linked reduction of 3-dehydroshikimate (DHSA) to yield shikimate (SA). The chain is Shikimate dehydrogenase (NADP(+)) from Paramagnetospirillum magneticum (strain ATCC 700264 / AMB-1) (Magnetospirillum magneticum).